A 485-amino-acid polypeptide reads, in one-letter code: MVFSSNVFLFLFLPIFLGLYYLSGQRYRNLLLLVASYIFYAWWRVDFLALFAGVTLWNYWIGLKVGAAGVRTKPAQRWLLLGVGVDLAILGYFKYANFGVDSLNAIMTSFGLEPFILTHVLLPIGISFYIFESISYIIDVYRGDTPATRNLIDFAAFVAIFPHLIAGPVLRFKDLVDQFNNRTHTLDKFSEGCTRFMQGFIKKVFIADTLAVVADHCFALQNPTTGDAWLGALAYTAQLYFDFSGYSDMAIGLGLMMGFRFMENFKQPYISQSITEFWRRWHISLSTWLRDYLYITLGGNRKGTFNTYRNLFLTMLLGGLWHGANFTYIIWGAWHGMWLAIERALGLDTNPQRFNPVKWAFTFLLVVVGWVIFRAENLHVAARMYGAMFSFGDWQLSELNRAQLTGLQVATLVIAYLTLAFFGLRDFYRNARPTPKATPVQVNADGSIGLDWTRVMTRALILLLFVASILKLSAQSYSPFLYFQF.

A run of 9 helical transmembrane segments spans residues 7–24, 39–61, 78–100, 115–137, 150–172, 312–334, 360–382, 402–424, and 461–483; these read VFLF…YLSG, FYAW…NYWI, WLLL…NFGV, FILT…ISYI, NLID…VLRF, FLTM…WGAW, AFTF…HVAA, AQLT…FFGL, and ILLL…FLYF. Residue His-322 is part of the active site.

This sequence belongs to the membrane-bound acyltransferase family.

The protein localises to the cell inner membrane. Its pathway is glycan biosynthesis; alginate biosynthesis. Together with AlgJ and AlgF, forms an inner membrane complex which probably interacts with the alginate polymerization-transport complex and adds acetyl groups at the O-2 and O-3 positions of mannuronate residues. Acetylation of alginate is important for the architecture of biofilms and increases the ability of alginate to act as a defense barrier. This is Probable alginate O-acetylase AlgI (algI) from Pseudomonas putida (strain ATCC 47054 / DSM 6125 / CFBP 8728 / NCIMB 11950 / KT2440).